Reading from the N-terminus, the 296-residue chain is Glycine N-acyltransferase-like protein (296 aa).

At Lys-41 the chain carries N6-acetyllysine; alternate. Lys-41 carries the post-translational modification N6-succinyllysine; alternate. At Lys-43 the chain carries N6-acetyllysine. N6-acetyllysine; alternate is present on Lys-48. Position 48 is an N6-succinyllysine; alternate (Lys-48). An N6-acetyllysine mark is found at Lys-80 and Lys-83. Lys-183 and Lys-256 each carry N6-acetyllysine; alternate. Lys-183 and Lys-256 each carry N6-succinyllysine; alternate.

This sequence belongs to the glycine N-acyltransferase family.

Its subcellular location is the mitochondrion. It carries out the reaction an acyl-CoA + glycine = an N-acylglycine + CoA + H(+). In terms of biological role, mitochondrial acyltransferase which transfers the acyl group to the N-terminus of glycine. Can conjugate a multitude of substrates to form a variety of N-acylglycines. This chain is Glycine N-acyltransferase-like protein (Gm4952), found in Mus musculus (Mouse).